Consider the following 291-residue polypeptide: Protease HtpX homolog (291 aa).

Helical transmembrane passes span 4-24 and 38-58; these read IVLF…SARL and MGML…ISLM. A Zn(2+)-binding site is contributed by His-144. The active site involves Glu-145. Residue His-148 coordinates Zn(2+). Helical transmembrane passes span 152–172 and 199–219; these read GDMV…IFLA and VSSI…VMFF. Residue Glu-224 participates in Zn(2+) binding.

Belongs to the peptidase M48B family. Zn(2+) serves as cofactor.

The protein localises to the cell inner membrane. The sequence is that of Protease HtpX homolog from Prosthecochloris aestuarii (strain DSM 271 / SK 413).